Reading from the N-terminus, the 395-residue chain is Succinyl-diaminopimelate desuccinylase (395 aa).

His74 serves as a coordination point for Zn(2+). Asp76 is an active-site residue. Asp107 lines the Zn(2+) pocket. Catalysis depends on Glu141, which acts as the Proton acceptor. Residues Glu142, Glu170, and His368 each contribute to the Zn(2+) site.

This sequence belongs to the peptidase M20A family. DapE subfamily. As to quaternary structure, homodimer. The cofactor is Zn(2+). Co(2+) is required as a cofactor.

It carries out the reaction N-succinyl-(2S,6S)-2,6-diaminopimelate + H2O = (2S,6S)-2,6-diaminopimelate + succinate. Its pathway is amino-acid biosynthesis; L-lysine biosynthesis via DAP pathway; LL-2,6-diaminopimelate from (S)-tetrahydrodipicolinate (succinylase route): step 3/3. Its function is as follows. Catalyzes the hydrolysis of N-succinyl-L,L-diaminopimelic acid (SDAP), forming succinate and LL-2,6-diaminopimelate (DAP), an intermediate involved in the bacterial biosynthesis of lysine and meso-diaminopimelic acid, an essential component of bacterial cell walls. This is Succinyl-diaminopimelate desuccinylase from Chelativorans sp. (strain BNC1).